The following is a 289-amino-acid chain: 4-diphosphocytidyl-2-C-methyl-D-erythritol kinase (289 aa).

Residue lysine 10 is part of the active site. 94-104 is an ATP binding site; sequence PVAAGLAGGSS. Aspartate 136 is an active-site residue.

This sequence belongs to the GHMP kinase family. IspE subfamily.

The catalysed reaction is 4-CDP-2-C-methyl-D-erythritol + ATP = 4-CDP-2-C-methyl-D-erythritol 2-phosphate + ADP + H(+). It functions in the pathway isoprenoid biosynthesis; isopentenyl diphosphate biosynthesis via DXP pathway; isopentenyl diphosphate from 1-deoxy-D-xylulose 5-phosphate: step 3/6. Its function is as follows. Catalyzes the phosphorylation of the position 2 hydroxy group of 4-diphosphocytidyl-2C-methyl-D-erythritol. In Bacillus mycoides (strain KBAB4) (Bacillus weihenstephanensis), this protein is 4-diphosphocytidyl-2-C-methyl-D-erythritol kinase.